The sequence spans 407 residues: Probable protein S-acyltransferase 9 (407 aa).

2 helical membrane passes run 28-48 and 62-82; these read WSIPFTFLLIITPVCFFSVFV and GHVFLVAGVLFTVFVLILLFL. Positions 136 to 179 constitute a DHHC domain; it reads KYCDTCMLYRPPRCSHCSICNNCVERFDHHCPWRNYRYFFMFVS. Cys166 acts as the S-palmitoyl cysteine intermediate in catalysis. A run of 2 helical transmembrane segments spans residues 174 to 194 and 217 to 237; these read FFMFVSSATILCIYIFSMSAL and AVMLMIYCFISLWFVGGLTGF. The tract at residues 300–407 is disordered; it reads LATTWERPEE…RSYAAAEEGR (108 aa). Basic and acidic residues predominate over residues 346–356; the sequence is DTAHHKIDIDQ.

This sequence belongs to the DHHC palmitoyltransferase family. Mainly expressed in seeds.

The protein localises to the cell membrane. It catalyses the reaction L-cysteinyl-[protein] + hexadecanoyl-CoA = S-hexadecanoyl-L-cysteinyl-[protein] + CoA. Palmitoyl acyltransferase. This chain is Probable protein S-acyltransferase 9 (PAT09), found in Arabidopsis thaliana (Mouse-ear cress).